The chain runs to 404 residues: LL-diaminopimelate aminotransferase (404 aa).

The substrate site is built by Tyr-15 and Gly-42. Pyridoxal 5'-phosphate-binding positions include Tyr-72, 108–109, Tyr-132, Asn-188, Tyr-219, and 247–249; these read AK and SFS. Positions 109, 132, and 188 each coordinate substrate. Lys-250 carries the post-translational modification N6-(pyridoxal phosphate)lysine. Residues Arg-258 and Asn-288 each contribute to the pyridoxal 5'-phosphate site. 2 residues coordinate substrate: Asn-288 and Arg-384.

This sequence belongs to the class-I pyridoxal-phosphate-dependent aminotransferase family. LL-diaminopimelate aminotransferase subfamily. In terms of assembly, homodimer. Pyridoxal 5'-phosphate is required as a cofactor.

The enzyme catalyses (2S,6S)-2,6-diaminopimelate + 2-oxoglutarate = (S)-2,3,4,5-tetrahydrodipicolinate + L-glutamate + H2O + H(+). The protein operates within amino-acid biosynthesis; L-lysine biosynthesis via DAP pathway; LL-2,6-diaminopimelate from (S)-tetrahydrodipicolinate (aminotransferase route): step 1/1. In terms of biological role, involved in the synthesis of meso-diaminopimelate (m-DAP or DL-DAP), required for both lysine and peptidoglycan biosynthesis. Catalyzes the direct conversion of tetrahydrodipicolinate to LL-diaminopimelate. The chain is LL-diaminopimelate aminotransferase from Agathobacter rectalis (strain ATCC 33656 / DSM 3377 / JCM 17463 / KCTC 5835 / VPI 0990) (Eubacterium rectale).